Consider the following 574-residue polypeptide: PI-PLC X domain-containing protein DDB_G0269228 (574 aa).

A disordered region spans residues 1–42; that stretch reads MFSSIMFKKKPKQNLNENEITSQSTTTTSTLSDSKPSEKKIK. Low complexity predominate over residues 21–34; the sequence is TSQSTTTTSTLSDS. Positions 270-449 constitute a PI-PLC X-box domain; sequence GIKSSSLRVP…LKKRIINDDG (180 aa).

The sequence is that of PI-PLC X domain-containing protein DDB_G0269228 from Dictyostelium discoideum (Social amoeba).